A 292-amino-acid polypeptide reads, in one-letter code: Diaminopimelate epimerase (292 aa).

Residues Asn-13, Gln-46, and Asn-66 each contribute to the substrate site. Cys-75 acts as the Proton donor in catalysis. Residues 76–77 (GN), Asn-166, Asn-199, and 217–218 (ER) each bind substrate. Cys-226 acts as the Proton acceptor in catalysis. Residue 227–228 (GT) coordinates substrate.

This sequence belongs to the diaminopimelate epimerase family. In terms of assembly, homodimer.

It is found in the cytoplasm. The catalysed reaction is (2S,6S)-2,6-diaminopimelate = meso-2,6-diaminopimelate. Its pathway is amino-acid biosynthesis; L-lysine biosynthesis via DAP pathway; DL-2,6-diaminopimelate from LL-2,6-diaminopimelate: step 1/1. Its function is as follows. Catalyzes the stereoinversion of LL-2,6-diaminopimelate (L,L-DAP) to meso-diaminopimelate (meso-DAP), a precursor of L-lysine and an essential component of the bacterial peptidoglycan. This chain is Diaminopimelate epimerase, found in Ralstonia nicotianae (strain ATCC BAA-1114 / GMI1000) (Ralstonia solanacearum).